We begin with the raw amino-acid sequence, 124 residues long: KESAAAKFERQHMDSSTSSASSSNYCNQMMKSRNLTQDRCKPVNTFVHESLADVQAVCSQKNVACKNGQTNCYQSYSTMSITDCRETGSSKYPNCAYKTTQAEKHIIVACEGNPYVPVHFDASV.

The segment covering 1-13 (KESAAAKFERQHM) has biased composition (basic and acidic residues). The segment at 1–24 (KESAAAKFERQHMDSSTSSASSSN) is disordered. Lys7 and Arg10 together coordinate substrate. His12 functions as the Proton acceptor in the catalytic mechanism. 4 disulfides stabilise this stretch: Cys26-Cys84, Cys40-Cys95, Cys58-Cys110, and Cys65-Cys72. N-linked (GlcNAc...) asparagine; partial glycosylation is present at Asn34. Substrate-binding positions include 41–45 (KPVNT), Lys66, and Arg85. His119 functions as the Proton donor in the catalytic mechanism.

It belongs to the pancreatic ribonuclease family. In terms of assembly, monomer. Interacts with and forms tight 1:1 complexes with RNH1. Dimerization of two such complexes may occur. Interaction with RNH1 inhibits this protein. In terms of tissue distribution, pancreas.

The protein resides in the secreted. It carries out the reaction an [RNA] containing cytidine + H2O = an [RNA]-3'-cytidine-3'-phosphate + a 5'-hydroxy-ribonucleotide-3'-[RNA].. The enzyme catalyses an [RNA] containing uridine + H2O = an [RNA]-3'-uridine-3'-phosphate + a 5'-hydroxy-ribonucleotide-3'-[RNA].. Functionally, endonuclease that catalyzes the cleavage of RNA on the 3' side of pyrimidine nucleotides. Acts on single-stranded and double-stranded RNA. This Ovis aries (Sheep) protein is Ribonuclease pancreatic (RNASE1).